The following is a 503-amino-acid chain: uncharacterized protein (503 aa).

It belongs to the Mg-chelatase subunits D/I family. ComM subfamily.

This is an uncharacterized protein from Mycobacterium tuberculosis (strain CDC 1551 / Oshkosh).